The primary structure comprises 660 residues: Class E vacuolar protein-sorting machinery protein HSE1 (660 aa).

The region spanning 16-148 (ATDENLASED…QLRAKNHVFD (133 aa)) is the VHS domain. The tract at residues 146 to 254 (VFDEPEPTPE…QPLEPEPPRV (109 aa)) is disordered. The segment covering 158 to 182 (EEARRRQEEEELQRVLELSKQDKGG) has biased composition (basic and acidic residues). In terms of domain architecture, UIM spans 164-183 (QEEEELQRVLELSKQDKGGR). Residues 190-230 (PSGSAGASSSSAANNNTSPSIPQSQAQPLAQDQAQSQAAPQ) are compositionally biased toward low complexity. Positions 257 to 316 (NTATCVRAIYPFTGQEVGELDFERGDVIKVLDRGFKEWWRGACNGKIGIFPVTYVEALPE) constitute an SH3 domain. Positions 437–503 (YSYQQYPQQP…PAQVQQDPAA (67 aa)) are enriched in low complexity. The interval 437–660 (YSYQQYPQQP…GMDRMSVHAP (224 aa)) is disordered. Over residues 517–533 (GSTTSVNRIPSAQTAVQ) the composition is skewed to polar residues. 2 stretches are compositionally biased toward low complexity: residues 573-623 (QQHG…AAYA) and 638-651 (GTQQGQGVEGVTAG).

This sequence belongs to the STAM family. As to quaternary structure, component of the ESCRT-0 complex composed of HSE1 and VPS27.

Its subcellular location is the endosome membrane. Functionally, component of the ESCRT-0 complex which is the sorting receptor for ubiquitinated cargo proteins at the multivesicular body (MVB). The chain is Class E vacuolar protein-sorting machinery protein HSE1 (HSE1) from Cryptococcus neoformans var. neoformans serotype D (strain B-3501A) (Filobasidiella neoformans).